Reading from the N-terminus, the 524-residue chain is Translation initiation factor eIF2B subunit delta (524 aa).

The disordered stretch occupies residues 1-155 (MAAVAVAVRE…EHTPADDPTL (155 aa)). At alanine 2 the chain carries N-acetylalanine. Basic and acidic residues-rich tracts occupy residues 8 to 20 (VREE…KTEL) and 31 to 40 (LTQEEKLQLR). Serine 12 carries the post-translational modification Phosphoserine. Residues 41–51 (KEKKQQKKKRK) are compositionally biased toward basic residues. At threonine 86 the chain carries Phosphothreonine. The span at 96 to 121 (SKAELRAERRAKQEAERALKQARKGE) shows a compositional bias: basic and acidic residues. Over residues 130–140 (CPSTAGETTSG) the composition is skewed to polar residues. Residues 171-180 (RKDYGSKVSL) are may bind the chemical integrated stress response (ISR) inhibitor ISRIB.

This sequence belongs to the eIF-2B alpha/beta/delta subunits family. As to quaternary structure, component of the translation initiation factor 2B (eIF2B) complex which is a heterodecamer of two sets of five different subunits: alpha, beta, gamma, delta and epsilon. Subunits alpha, beta and delta comprise a regulatory subcomplex and subunits epsilon and gamma comprise a catalytic subcomplex. Within the complex, the hexameric regulatory complex resides at the center, with the two heterodimeric catalytic subcomplexes bound on opposite sides.

Its subcellular location is the cytoplasm. It localises to the cytosol. Activated by the chemical integrated stress response (ISR) inhibitor ISRIB which stimulates guanine nucleotide exchange factor activity for both phosphorylated and unphosphorylated eIF2. In terms of biological role, acts as a component of the translation initiation factor 2B (eIF2B) complex, which catalyzes the exchange of GDP for GTP on eukaryotic initiation factor 2 (eIF2) gamma subunit. Its guanine nucleotide exchange factor activity is repressed when bound to eIF2 complex phosphorylated on the alpha subunit, thereby limiting the amount of methionyl-initiator methionine tRNA available to the ribosome and consequently global translation is repressed. The sequence is that of Translation initiation factor eIF2B subunit delta (Eif2b4) from Mus musculus (Mouse).